A 105-amino-acid polypeptide reads, in one-letter code: Replication initiation control protein YabA (105 aa).

Residues histidine 79, cysteine 81, cysteine 95, and cysteine 98 each coordinate Zn(2+).

Belongs to the YabA family. Homotetramer. Interacts with both DnaA and DnaN, acting as a bridge between these two proteins. Requires Zn(2+) as cofactor.

The protein localises to the cytoplasm. Its subcellular location is the nucleoid. In terms of biological role, involved in control of chromosome replication initiation. Inhibits the cooperative binding of DnaA to the oriC region, thus negatively regulating initiation of chromosome replication. Inhibits the ability of DnaA-ATP to form a helix on DNA; does not disassemble preformed DnaA-DNA helices. Decreases the residence time of DnaA on the chromosome at its binding sites (oriC, replication forks and promoter-binding sites). Tethers DnaA to the replication machinery via the DNA polymerase beta sliding clamp subunit (dnaN). Associates with oriC and other DnaA targets on the chromosome in a DnaA-dependent manner. The chain is Replication initiation control protein YabA from Streptococcus pneumoniae serotype 2 (strain D39 / NCTC 7466).